A 386-amino-acid polypeptide reads, in one-letter code: Succinate--CoA ligase [ADP-forming] subunit beta (386 aa).

Residues 9–244 (KELFANYGVP…LDEEEPLEVE (236 aa)) form the ATP-grasp domain. Residues lysine 46, 53–55 (GRG), glutamate 99, leucine 102, and glutamate 107 each bind ATP. Mg(2+)-binding residues include asparagine 199 and aspartate 213. Residues asparagine 264 and 321–323 (GIL) each bind substrate.

The protein belongs to the succinate/malate CoA ligase beta subunit family. In terms of assembly, heterotetramer of two alpha and two beta subunits. Requires Mg(2+) as cofactor.

It carries out the reaction succinate + ATP + CoA = succinyl-CoA + ADP + phosphate. The enzyme catalyses GTP + succinate + CoA = succinyl-CoA + GDP + phosphate. It participates in carbohydrate metabolism; tricarboxylic acid cycle; succinate from succinyl-CoA (ligase route): step 1/1. Functionally, succinyl-CoA synthetase functions in the citric acid cycle (TCA), coupling the hydrolysis of succinyl-CoA to the synthesis of either ATP or GTP and thus represents the only step of substrate-level phosphorylation in the TCA. The beta subunit provides nucleotide specificity of the enzyme and binds the substrate succinate, while the binding sites for coenzyme A and phosphate are found in the alpha subunit. The protein is Succinate--CoA ligase [ADP-forming] subunit beta of Desulfatibacillum aliphaticivorans.